A 482-amino-acid polypeptide reads, in one-letter code: Serine decarboxylase 1 (482 aa).

Positions 36-55 (EVESPPRPAEEEGEGSPTRR) are disordered. Residue His200 coordinates substrate. Position 312 is an N6-(pyridoxal phosphate)lysine (Lys312).

Belongs to the group II decarboxylase family. The cofactor is pyridoxal 5'-phosphate.

The catalysed reaction is L-serine + H(+) = ethanolamine + CO2. Catalyzes the biosynthesis of ethanolamine from serine. Decarboxylation of free serine is the major source of ethanolamine production in plants and ethanolamine metabolism is crucial for the synthesis of choline, phosphatidylethanolamine (PE) and phosphatidylcholine (PC), and thus for plant growth. The sequence is that of Serine decarboxylase 1 (SDC1) from Oryza sativa subsp. japonica (Rice).